The following is a 724-amino-acid chain: Long-chain-fatty-acid--CoA ligase ACSBG1 (724 aa).

The interval 1–51 (MPRNSGAGYGCPHGDPSMLDSRETPQESRQDMTVGTTQEKLKTSSLTDRQP) is disordered. Residues 20 to 30 (DSRETPQESRQ) show a composition bias toward basic and acidic residues. A compositionally biased stretch (polar residues) spans 31–51 (DMTVGTTQEKLKTSSLTDRQP). Phosphoserine occurs at positions 53 and 56. Residues 282–290 (TSGTTGNPK), 472–477 (AGYGLS), D550, and R565 contribute to the ATP site. Y658 carries the post-translational modification Phosphotyrosine. An ATP-binding site is contributed by K701.

The protein belongs to the ATP-dependent AMP-binding enzyme family. Bubblegum subfamily.

It is found in the cytoplasm. It localises to the cytoplasmic vesicle. The protein localises to the microsome. The protein resides in the endoplasmic reticulum. Its subcellular location is the cell membrane. The catalysed reaction is a long-chain fatty acid + ATP + CoA = a long-chain fatty acyl-CoA + AMP + diphosphate. The enzyme catalyses (E)-hexadec-2-enoate + ATP + CoA = (2E)-hexadecenoyl-CoA + AMP + diphosphate. It carries out the reaction hexadecanoate + ATP + CoA = hexadecanoyl-CoA + AMP + diphosphate. Functionally, catalyzes the conversion of fatty acids such as long-chain and very long-chain fatty acids to their active form acyl-CoAs for both synthesis of cellular lipids, and degradation via beta-oxidation. Can activate diverse saturated, monosaturated and polyunsaturated fatty acids. The sequence is that of Long-chain-fatty-acid--CoA ligase ACSBG1 from Macaca fascicularis (Crab-eating macaque).